We begin with the raw amino-acid sequence, 487 residues long: NADH-quinone oxidoreductase subunit N (487 aa).

A run of 13 helical transmembrane segments spans residues 7 to 27, 37 to 57, 81 to 101, 112 to 132, 166 to 186, 207 to 227, 237 to 257, 276 to 296, 307 to 327, 329 to 349, 373 to 393, 407 to 427, and 452 to 472; these read LTLI…ILIT, LVSI…APAL, FAKI…PAFF, PVLV…GDLI, FVLG…VYGF, ALFG…AVPF, GAPT…AVAL, IVIF…IGQT, INNV…GLSA, LTYL…LLML, LAWC…LLGF, DMVL…FYYI, and VLLI…TGWL.

This sequence belongs to the complex I subunit 2 family. As to quaternary structure, NDH-1 is composed of 14 different subunits. Subunits NuoA, H, J, K, L, M, N constitute the membrane sector of the complex.

It is found in the cell inner membrane. It catalyses the reaction a quinone + NADH + 5 H(+)(in) = a quinol + NAD(+) + 4 H(+)(out). Functionally, NDH-1 shuttles electrons from NADH, via FMN and iron-sulfur (Fe-S) centers, to quinones in the respiratory chain. The immediate electron acceptor for the enzyme in this species is believed to be ubiquinone. Couples the redox reaction to proton translocation (for every two electrons transferred, four hydrogen ions are translocated across the cytoplasmic membrane), and thus conserves the redox energy in a proton gradient. The sequence is that of NADH-quinone oxidoreductase subunit N from Erythrobacter litoralis (strain HTCC2594).